Reading from the N-terminus, the 236-residue chain is Phosphoribosylaminoimidazole-succinocarboxamide synthase (236 aa).

The protein belongs to the SAICAR synthetase family.

It catalyses the reaction 5-amino-1-(5-phospho-D-ribosyl)imidazole-4-carboxylate + L-aspartate + ATP = (2S)-2-[5-amino-1-(5-phospho-beta-D-ribosyl)imidazole-4-carboxamido]succinate + ADP + phosphate + 2 H(+). It participates in purine metabolism; IMP biosynthesis via de novo pathway; 5-amino-1-(5-phospho-D-ribosyl)imidazole-4-carboxamide from 5-amino-1-(5-phospho-D-ribosyl)imidazole-4-carboxylate: step 1/2. This chain is Phosphoribosylaminoimidazole-succinocarboxamide synthase, found in Chlorobium limicola (strain DSM 245 / NBRC 103803 / 6330).